Here is a 442-residue protein sequence, read N- to C-terminus: Endothelin receptor type B (442 aa).

The first 26 residues, 1–26 (MQSSASRCGRALVALLLACGLLGVWG), serve as a signal peptide directing secretion. Topologically, residues 27-101 (EKRGFPPAQA…RKIEINKTFK (75 aa)) are extracellular. 2 N-linked (GlcNAc...) asparagine glycosylation sites follow: Asn-60 and Asn-97. Residues 102–126 (YINTIVSCLVFVLGIIGNSTLLRII) form a helical membrane-spanning segment. Residues 127–137 (YKNKCMRNGPN) lie on the Cytoplasmic side of the membrane. The chain crosses the membrane as a helical span at residues 138 to 163 (ILIASLALGDLLHIIIDIPINAYKLL). Over 164–175 (AGDWPFGAEMCK) the chain is Extracellular. Residues Cys-174 and Cys-255 are joined by a disulfide bond. Residues 176-197 (LVPFIQKASVGITVLSLCALSI) traverse the membrane as a helical segment. Over 198–218 (DRYRAVASWSRIKGIGVPKWT) the chain is Cytoplasmic. The chain crosses the membrane as a helical span at residues 219–243 (AVEIVLIWVVSVVLAVPEAIGFDVI). Topologically, residues 244 to 271 (TSDYKGKPLRVCMLNPFQKTAFMQFYKT) are extracellular. A helical transmembrane segment spans residues 272–296 (AKDWWLFSFYFCLPLAITAIFYTLM). Residues 297 to 324 (TCEMLRKKSGMQIALNDHLKQRREVAKT) lie on the Cytoplasmic side of the membrane. Ser-305 is modified (phosphoserine). A helical transmembrane segment spans residues 325-350 (VFCLVLVFALCWLPLHLSRILKLTLY). Topologically, residues 351-362 (DQSNPQRCELLS) are extracellular. Residues 363–389 (FLLVLDYIGINMASLNSCINPIALYLV) traverse the membrane as a helical segment. The Cytoplasmic segment spans residues 390–442 (SKRFKNCFKSCLCCWCQTFEEKQSLEEKQSCLKFKANDHGYDNFRSSNKYSSS). 3 S-palmitoyl cysteine lipidation sites follow: Cys-402, Cys-403, and Cys-405. Ser-419 is subject to Phosphoserine. Tyr-439 carries the post-translational modification Phosphotyrosine. A phosphoserine mark is found at Ser-440, Ser-441, and Ser-442.

It belongs to the G-protein coupled receptor 1 family. Endothelin receptor subfamily. EDNRB sub-subfamily. Widely distributed in cell types of a variety of tissues.

The protein localises to the cell membrane. In terms of biological role, non-specific receptor for endothelin 1, 2, and 3. Mediates its action by association with G proteins that activate a phosphatidylinositol-calcium second messenger system. This Rattus norvegicus (Rat) protein is Endothelin receptor type B.